The sequence spans 82 residues: Mu-conotoxin MrVIB (82 aa).

An N-terminal signal peptide occupies residues 1–22 (MKLTCMMIVAVLFLTAWTLVMA). Residues 23-49 (DDSNNGLANHFLKSRDEMEDPEASKLE) constitute a propeptide that is removed on maturation. 3 disulfides stabilise this stretch: cysteine 53–cysteine 71, cysteine 60–cysteine 76, and cysteine 70–cysteine 81.

It belongs to the conotoxin O1 superfamily. As to expression, expressed by the venom duct.

The protein localises to the secreted. MuO-conotoxins are gating-modifier toxins that inhibit sodium current by trapping the domain II voltage sensor in the closed position to prevent opening of the sodium channel. This toxin has a preference for Nav1.4/SCN4A over Nav1.2/SCN2A sodium channels. It blocks Nav channels by interacting mainly with the C-terminal part of the pore loop of domain-3. It also blocks fast-inactivating calcium current. Blocks Nav1.8/SCN10A sodium channels and has potent and long-lasting local anesthetic effects. It can also block propagation of action potentials in A- and C-fibers in sciatic nerve as well as skeletal muscle in isolated preparations. In Conus marmoreus (Marble cone), this protein is Mu-conotoxin MrVIB.